A 600-amino-acid chain; its full sequence is NADH-quinone oxidoreductase subunit C/D (600 aa).

The interval M1–E190 is NADH dehydrogenase I subunit C. Positions E214 to R600 are NADH dehydrogenase I subunit D.

This sequence in the N-terminal section; belongs to the complex I 30 kDa subunit family. The protein in the C-terminal section; belongs to the complex I 49 kDa subunit family. As to quaternary structure, NDH-1 is composed of 13 different subunits. Subunits NuoB, CD, E, F, and G constitute the peripheral sector of the complex.

The protein localises to the cell membrane. The catalysed reaction is a quinone + NADH + 5 H(+)(in) = a quinol + NAD(+) + 4 H(+)(out). Functionally, NDH-1 shuttles electrons from NADH, via FMN and iron-sulfur (Fe-S) centers, to quinones in the respiratory chain. The immediate electron acceptor for the enzyme in this species is believed to be ubiquinone. Couples the redox reaction to proton translocation (for every two electrons transferred, four hydrogen ions are translocated across the cytoplasmic membrane), and thus conserves the redox energy in a proton gradient. In Buchnera aphidicola subsp. Acyrthosiphon pisum (strain Tuc7), this protein is NADH-quinone oxidoreductase subunit C/D.